A 452-amino-acid polypeptide reads, in one-letter code: Protein mab-21-like 4 (452 aa).

The polypeptide is Protein mab-21-like 4 (Mab21l4) (Mus musculus (Mouse)).